The sequence spans 318 residues: Curved DNA-binding protein (318 aa).

Residues 5-69 (DYYKILGVEP…QKRAEFDEIR (65 aa)) enclose the J domain. A disordered region spans residues 111–130 (GGGNPFGGARQQQRSAGRRG).

The protein localises to the cytoplasm. Its subcellular location is the nucleoid. Its function is as follows. DNA-binding protein that preferentially recognizes a curved DNA sequence. It is probably a functional analog of DnaJ; displays overlapping activities with DnaJ, but functions under different conditions, probably acting as a molecular chaperone in an adaptive response to environmental stresses other than heat shock. Lacks autonomous chaperone activity; binds native substrates and targets them for recognition by DnaK. Its activity is inhibited by the binding of CbpM. This chain is Curved DNA-binding protein, found in Pseudomonas putida (strain GB-1).